Reading from the N-terminus, the 91-residue chain is Acyl carrier protein AsbD (91 aa).

Residues 4–82 form the Carrier domain; it reads EALKNAVLKI…SLLDFMEELQ (79 aa). O-(pantetheine 4'-phosphoryl)serine is present on Ser-40.

It belongs to the acyl carrier protein (ACP) family. In terms of processing, activated by the transfer of a 4'-phosphopantetheine group from CoA to Ser-40.

The protein operates within siderophore biosynthesis; petrobactin biosynthesis. Its function is as follows. Involved in the biosynthesis of petrobactin, a catecholate siderophore that functions in both iron acquisition and virulence. Aryl-carrier protein that activates 3,4-dihydroxybenzoate (3,4-DHBA) prior to its incorporation into petrobactin. The chain is Acyl carrier protein AsbD from Bacillus anthracis.